The chain runs to 508 residues: Light-independent protochlorophyllide reductase subunit B (508 aa).

Residue D36 participates in [4Fe-4S] cluster binding. The Proton donor role is filled by D294. 429-430 (GM) contacts substrate.

Belongs to the ChlB/BchB/BchZ family. In terms of assembly, protochlorophyllide reductase is composed of three subunits; ChlL, ChlN and ChlB. Forms a heterotetramer of two ChlB and two ChlN subunits. [4Fe-4S] cluster is required as a cofactor.

It carries out the reaction chlorophyllide a + oxidized 2[4Fe-4S]-[ferredoxin] + 2 ADP + 2 phosphate = protochlorophyllide a + reduced 2[4Fe-4S]-[ferredoxin] + 2 ATP + 2 H2O. It participates in porphyrin-containing compound metabolism; chlorophyll biosynthesis (light-independent). Component of the dark-operative protochlorophyllide reductase (DPOR) that uses Mg-ATP and reduced ferredoxin to reduce ring D of protochlorophyllide (Pchlide) to form chlorophyllide a (Chlide). This reaction is light-independent. The NB-protein (ChlN-ChlB) is the catalytic component of the complex. The polypeptide is Light-independent protochlorophyllide reductase subunit B (Crocosphaera subtropica (strain ATCC 51142 / BH68) (Cyanothece sp. (strain ATCC 51142))).